Consider the following 251-residue polypeptide: Triosephosphate isomerase (251 aa).

A substrate-binding site is contributed by N9–K11. The active-site Electrophile is H95. E167 (proton acceptor) is an active-site residue. Substrate-binding positions include G173, S213, and G234–G235. S213 is modified (phosphoserine).

The protein belongs to the triosephosphate isomerase family. Homodimer.

It localises to the cytoplasm. The enzyme catalyses D-glyceraldehyde 3-phosphate = dihydroxyacetone phosphate. The protein operates within carbohydrate biosynthesis; gluconeogenesis. It participates in carbohydrate degradation; glycolysis; D-glyceraldehyde 3-phosphate from glycerone phosphate: step 1/1. Involved in the gluconeogenesis. Catalyzes stereospecifically the conversion of dihydroxyacetone phosphate (DHAP) to D-glyceraldehyde-3-phosphate (G3P). This is Triosephosphate isomerase from Priestia megaterium (strain DSM 319 / IMG 1521) (Bacillus megaterium).